The sequence spans 369 residues: Glycolate oxidase (369 aa).

Met1 is modified (N-acetylmethionine). The 359-residue stretch at 1–359 (MEITNVNEYE…SRSHIAADWD (359 aa)) folds into the FMN hydroxy acid dehydrogenase domain. Tyr24 provides a ligand contact to glyoxylate. Residues 77–79 (PTA), Ser106, 127–129 (QLY), and Thr155 contribute to the FMN site. Tyr129 serves as a coordination point for glyoxylate. Arg164 is a glyoxylate binding site. Residues Lys230 and Ser252 each contribute to the FMN site. 2 residues coordinate glyoxylate: His254 and Arg257. His254 (proton acceptor) is an active-site residue. Residues 285 to 289 (DGGVR) and 308 to 309 (GR) contribute to the FMN site. Residues 367-369 (ARL) carry the Microbody targeting signal motif.

This sequence belongs to the FMN-dependent alpha-hydroxy acid dehydrogenase family. As to quaternary structure, homotetramer. Requires FMN as cofactor.

Its subcellular location is the peroxisome. It carries out the reaction glycolate + O2 = glyoxylate + H2O2. The enzyme catalyses a (2S)-2-hydroxycarboxylate + O2 = a 2-oxocarboxylate + H2O2. It functions in the pathway photosynthesis; photorespiration; glycine from 2-phosphoglycolate: step 2/3. In terms of biological role, catalyzes the oxidation of glycolate to glyoxylate, with a reduction of O2 to H2O2. Is a key enzyme in photorespiration in green plants. To a lesser extent, is also able to use L-lactate and 2-hydroxbyutanoate as substrate in vitro, but shows almost no activity with L-mandelate. In Spinacia oleracea (Spinach), this protein is Glycolate oxidase.